Consider the following 285-residue polypeptide: Gas vesicle protein C2 (285 aa).

A run of 6 repeats spans residues 22 to 52, 53 to 84, 85 to 122, 123 to 155, 156 to 188, and 189 to 220. The 6 X approximate tandem repeats stretch occupies residues 22–220; that stretch reads EAMDAYAEEF…ADDTTAQTDV (199 aa).

Belongs to the halobacterial gas vesicle GvpC family.

It localises to the gas vesicle. Functionally, confers stability, involved in shaping gas vesicles (GV), hollow, gas filled proteinaceous nanostructures. GVs allow positioning of halobacteria at an optimal depth for growth in the poorly aerated, shallow brine pools of their habitat. Its function is as follows. Expression of 2 c-vac DNA fragments containing 2 divergently transcribed regions (gvpE-gvpF-gvpG-gvpH-gvpI-gvpJ-gvpK-gvpL-gvpM and gvpA-gvpC-gvpN-gvpO) allows H.volcanii to produce gas vesicles. The chain is Gas vesicle protein C2 from Halobacterium salinarum (strain ATCC 700922 / JCM 11081 / NRC-1) (Halobacterium halobium).